The sequence spans 421 residues: Imidazolonepropionase (421 aa).

Residues His-81 and His-83 each coordinate Fe(3+). Residues His-81 and His-83 each coordinate Zn(2+). Positions 90, 153, and 186 each coordinate 4-imidazolone-5-propanoate. Tyr-153 is a binding site for N-formimidoyl-L-glutamate. Residue His-251 participates in Fe(3+) binding. His-251 contacts Zn(2+). Glu-254 is a 4-imidazolone-5-propanoate binding site. Asp-326 serves as a coordination point for Fe(3+). Residue Asp-326 participates in Zn(2+) binding. N-formimidoyl-L-glutamate is bound by residues Asn-328 and Gly-330. Ser-331 serves as a coordination point for 4-imidazolone-5-propanoate.

This sequence belongs to the metallo-dependent hydrolases superfamily. HutI family. It depends on Zn(2+) as a cofactor. Fe(3+) is required as a cofactor.

The protein localises to the cytoplasm. It catalyses the reaction 4-imidazolone-5-propanoate + H2O = N-formimidoyl-L-glutamate. It functions in the pathway amino-acid degradation; L-histidine degradation into L-glutamate; N-formimidoyl-L-glutamate from L-histidine: step 3/3. Its function is as follows. Catalyzes the hydrolytic cleavage of the carbon-nitrogen bond in imidazolone-5-propanoate to yield N-formimidoyl-L-glutamate. It is the third step in the universal histidine degradation pathway. This Streptococcus pyogenes serotype M6 (strain ATCC BAA-946 / MGAS10394) protein is Imidazolonepropionase.